Reading from the N-terminus, the 108-residue chain is Large ribosomal subunit protein uL22 (108 aa).

It belongs to the universal ribosomal protein uL22 family. Part of the 50S ribosomal subunit.

This protein binds specifically to 23S rRNA; its binding is stimulated by other ribosomal proteins, e.g. L4, L17, and L20. It is important during the early stages of 50S assembly. It makes multiple contacts with different domains of the 23S rRNA in the assembled 50S subunit and ribosome. In terms of biological role, the globular domain of the protein is located near the polypeptide exit tunnel on the outside of the subunit, while an extended beta-hairpin is found that lines the wall of the exit tunnel in the center of the 70S ribosome. The polypeptide is Large ribosomal subunit protein uL22 (Nitratiruptor sp. (strain SB155-2)).